The sequence spans 313 residues: Oxaloacetate tautomerase Fahd2a, mitochondrial (313 aa).

The transit peptide at 1 to 84 (MLGSGRRRLL…TALSVARRAL (84 aa)) directs the protein to the mitochondrion. Residues Glu159, Glu161, and Asp190 each contribute to the Mg(2+) site. Lys202 carries the N6-acetyllysine; alternate modification. Position 202 is an N6-succinyllysine; alternate (Lys202). An N6-acetyllysine modification is found at Lys233.

The protein belongs to the FAH family. It depends on Mg(2+) as a cofactor. The cofactor is Mn(2+).

Its subcellular location is the mitochondrion. It carries out the reaction oxaloacetate = enol-oxaloacetate. Its function is as follows. Tautomerase that converts enol-oxaloacetate, a strong inhibitor of succinate dehydrogenase, to the physiological keto form of oxaloacetate. It is thereby required to maximize aerobic respiration efficiency by preventing succinate dehydrogenase inhibition. In Rattus norvegicus (Rat), this protein is Oxaloacetate tautomerase Fahd2a, mitochondrial.